A 117-amino-acid polypeptide reads, in one-letter code: Ribonuclease P protein component (117 aa).

Belongs to the RnpA family. In terms of assembly, consists of a catalytic RNA component (M1 or rnpB) and a protein subunit.

The catalysed reaction is Endonucleolytic cleavage of RNA, removing 5'-extranucleotides from tRNA precursor.. Functionally, RNaseP catalyzes the removal of the 5'-leader sequence from pre-tRNA to produce the mature 5'-terminus. It can also cleave other RNA substrates such as 4.5S RNA. The protein component plays an auxiliary but essential role in vivo by binding to the 5'-leader sequence and broadening the substrate specificity of the ribozyme. In Thermotoga petrophila (strain ATCC BAA-488 / DSM 13995 / JCM 10881 / RKU-1), this protein is Ribonuclease P protein component.